A 168-amino-acid chain; its full sequence is Large ribosomal subunit protein uL10 (168 aa).

Belongs to the universal ribosomal protein uL10 family. Part of the ribosomal stalk of the 50S ribosomal subunit. The N-terminus interacts with L11 and the large rRNA to form the base of the stalk. The C-terminus forms an elongated spine to which L12 dimers bind in a sequential fashion forming a multimeric L10(L12)X complex.

Functionally, forms part of the ribosomal stalk, playing a central role in the interaction of the ribosome with GTP-bound translation factors. This is Large ribosomal subunit protein uL10 from Laribacter hongkongensis (strain HLHK9).